The chain runs to 934 residues: Isoleucine--tRNA ligase (934 aa).

The 'HIGH' region signature appears at 58-68 (PYANGEIHIGH). Glu-559 contributes to the L-isoleucyl-5'-AMP binding site. A 'KMSKS' region motif is present at residues 600–604 (KMSKS). An ATP-binding site is contributed by Lys-603. Residues Cys-897, Cys-900, Cys-917, and Cys-920 each contribute to the Zn(2+) site.

Belongs to the class-I aminoacyl-tRNA synthetase family. IleS type 1 subfamily. As to quaternary structure, monomer. The cofactor is Zn(2+).

Its subcellular location is the cytoplasm. It carries out the reaction tRNA(Ile) + L-isoleucine + ATP = L-isoleucyl-tRNA(Ile) + AMP + diphosphate. Its function is as follows. Catalyzes the attachment of isoleucine to tRNA(Ile). As IleRS can inadvertently accommodate and process structurally similar amino acids such as valine, to avoid such errors it has two additional distinct tRNA(Ile)-dependent editing activities. One activity is designated as 'pretransfer' editing and involves the hydrolysis of activated Val-AMP. The other activity is designated 'posttransfer' editing and involves deacylation of mischarged Val-tRNA(Ile). In Teredinibacter turnerae (strain ATCC 39867 / T7901), this protein is Isoleucine--tRNA ligase.